The following is a 301-amino-acid chain: GTPase Era (301 aa).

The region spanning 7-175 (YCGFVAIVGR…AAIVRKHLPE (169 aa)) is the Era-type G domain. Positions 15–22 (GRPNVGKS) are G1. GTP is bound at residue 15–22 (GRPNVGKS). Positions 41–45 (QTTRH) are G2. Positions 62–65 (DTPG) are G3. Residues 62 to 66 (DTPGL) and 124 to 127 (NKVD) contribute to the GTP site. Residues 124–127 (NKVD) form a G4 region. Residues 154 to 156 (ISA) form a G5 region. Residues 206–283 (LGAELPYSVT…HLELWVKVKS (78 aa)) form the KH type-2 domain.

The protein belongs to the TRAFAC class TrmE-Era-EngA-EngB-Septin-like GTPase superfamily. Era GTPase family. As to quaternary structure, monomer.

The protein localises to the cytoplasm. It localises to the cell inner membrane. Its function is as follows. An essential GTPase that binds both GDP and GTP, with rapid nucleotide exchange. Plays a role in 16S rRNA processing and 30S ribosomal subunit biogenesis and possibly also in cell cycle regulation and energy metabolism. The chain is GTPase Era from Klebsiella pneumoniae subsp. pneumoniae (strain ATCC 700721 / MGH 78578).